Consider the following 85-residue polypeptide: Phosphocarrier protein HPr (85 aa).

One can recognise an HPr domain in the interval 1–85; sequence MYEKQVEITA…HLVALMDQLH (85 aa). The Pros-phosphohistidine intermediate role is filled by His-15.

This sequence belongs to the HPr family.

Its subcellular location is the cytoplasm. General (non sugar-specific) component of the phosphoenolpyruvate-dependent sugar phosphotransferase system (sugar PTS). This major carbohydrate active-transport system catalyzes the phosphorylation of incoming sugar substrates concomitantly with their translocation across the cell membrane. The phosphoryl group from phosphoenolpyruvate (PEP) is transferred to the phosphoryl carrier protein HPr by enzyme I. Phospho-HPr then transfers it to the PTS EIIA domain. The protein is Phosphocarrier protein HPr (ptsH) of Vibrio cholerae serotype O1 (strain ATCC 39315 / El Tor Inaba N16961).